The chain runs to 531 residues: Protein arginine N-methyltransferase 3 (531 aa).

Residues 1-43 (MCSLASGATGGRGAVENEEDLPELSDSGDEAAWEDEDDADLPH) are disordered. Residue cysteine 2 is modified to N-acetylcysteine. Residues 16 to 39 (ENEEDLPELSDSGDEAAWEDEDDA) are compositionally biased toward acidic residues. Residues serine 25 and serine 27 each carry the phosphoserine modification. A C2H2-type zinc finger spans residues 48-71 (TPCLFCNRLFTSAEETFSHCKSEH). The tract at residues 48–71 (TPCLFCNRLFTSAEETFSHCKSEH) is interaction with ZNF200. A Phosphoserine modification is found at serine 171. Positions 186–531 (MKQFAQDFVM…NNSTQTYGLQ (346 aa)) are mediates interaction with ALDH1A1. The 315-residue stretch at 217–531 (DGVYFSSYGH…NNSTQTYGLQ (315 aa)) folds into the SAM-dependent MTase PRMT-type domain. Residues arginine 239, glycine 263, aspartate 285, isoleucine 313, and glutamate 314 each contribute to the S-adenosyl-L-homocysteine site. Active-site residues include glutamate 329 and glutamate 338. Serine 343 is a binding site for S-adenosyl-L-homocysteine.

This sequence belongs to the class I-like SAM-binding methyltransferase superfamily. Protein arginine N-methyltransferase family. Monomer and homodimer. Interacts with EPB41L3 (via FERM domain); the interaction is direct and inhibits the protein-arginine N-methyltransferase activity of PRMT3. Interacts with the 40S ribosomal protein RPS2. Interacts with ALDH1A1; the interaction is direct, inhibits ALDH1A1 aldehyde dehydrogenase activity and is independent of the methyltransferase activity of PRMT3. Interacts (via zinc-finger) with ZNF200 (via C-terminus); the interaction is direct and required to localize PRMT3 to the nucleus and inhibit its proteasomal degradation.

The protein resides in the cytoplasm. It is found in the cytosol. It localises to the nucleus. The catalysed reaction is L-arginyl-[protein] + S-adenosyl-L-methionine = N(omega)-methyl-L-arginyl-[protein] + S-adenosyl-L-homocysteine + H(+). It carries out the reaction L-arginyl-[protein] + 2 S-adenosyl-L-methionine = N(omega),N(omega)-dimethyl-L-arginyl-[protein] + 2 S-adenosyl-L-homocysteine + 2 H(+). Its activity is regulated as follows. Inhibited by N-ethylmaleimide and high concentrations of zinc chloride. Allosterically inhibited by SGC707. Allosterically inhibited by (1-(benzo[d][1,2,3]thiadiazol- 6-yl)-3-(2-cyclohexenylethyl)urea) and derivatives thereof. Functionally, protein-arginine N-methyltransferase that catalyzes both the monomethylation and asymmetric dimethylation of the guanidino nitrogens of arginine residues in target proteins, and therefore falls into the group of type I methyltransferases. Catalyzes the asymmetric arginine dimethylation at multiple sites in the Arg/Gly-rich region of small ribosomal subunit protein uS5/RPS2. Also appears to methylate other ribosomal proteins. May regulate retinoic acid synthesis and signaling by inhibiting ALDH1A1 retinal dehydrogenase activity. Contributes to methylation of histone H4 'Arg-3', a specific tag for epigenetic transcriptional activation. Mediates asymmetric arginine dimethylation of histone H4 'Arg-3' (H4R3me2a) in the promoter region of miRNA miR-3648, to promote its transcription and osteogenesis. This is Protein arginine N-methyltransferase 3 from Homo sapiens (Human).